The chain runs to 104 residues: Small ribosomal subunit protein uS10 (104 aa).

Belongs to the universal ribosomal protein uS10 family. In terms of assembly, part of the 30S ribosomal subunit.

Involved in the binding of tRNA to the ribosomes. This chain is Small ribosomal subunit protein uS10, found in Aquifex aeolicus (strain VF5).